Here is a 636-residue protein sequence, read N- to C-terminus: Rik1-associated factor 2 (636 aa).

Component of the Clr4 methyltransferase complex (ClrC) composed of at least clr4, rik1, pcu4, rbx1, raf1 and raf2. The cullin pcu4, rik1, raf1, raf2 and the ring-box protein rbx1 are components of an E3 ubiquitin ligase, whose activity is essential for heterochromatin assembly. Interacts with pcu4.

It localises to the cytoplasm. The protein localises to the mitochondrion. It is found in the nucleus. The protein resides in the chromosome. In terms of biological role, component of the Clr4 methyltransferase complex (ClrC) which contributes to the establishment of heterochromatin by specifically methylating histone H3 to form H3K9me. ClrC preferentially ubiquitylates H3K14 and ClrC-mediated H3 ubiquitination promotes clr4 methyltransferase activity for the methylation of H3K9. H3K9me represents a specific tag for epigenetic transcriptional repression by recruiting swi6/HP1 to methylated histones which leads to transcriptional silencing within centromeric heterochromatin, telomeric regions and at the silent mating-type loci. Has a role in both mitotic and meiotic chromosome segregation. This is Rik1-associated factor 2 (raf2) from Schizosaccharomyces pombe (strain 972 / ATCC 24843) (Fission yeast).